A 359-amino-acid polypeptide reads, in one-letter code: Molybdenum import ATP-binding protein ModC (359 aa).

The 229-residue stretch at 1–229 (MLELNFSQQL…SALRPWLQRE (229 aa)) folds into the ABC transporter domain. ATP is bound at residue 31–38 (GLSGAGKT). A Mop domain is found at 289–354 (SSSIRNILPV…IKSVSFNRQN (66 aa)).

This sequence belongs to the ABC transporter superfamily. Molybdate importer (TC 3.A.1.8) family. In terms of assembly, the complex is composed of two ATP-binding proteins (ModC), two transmembrane proteins (ModB) and a solute-binding protein (ModA).

The protein resides in the cell inner membrane. It catalyses the reaction molybdate(out) + ATP + H2O = molybdate(in) + ADP + phosphate + H(+). Functionally, part of the ABC transporter complex ModABC involved in molybdenum import. Responsible for energy coupling to the transport system. This chain is Molybdenum import ATP-binding protein ModC, found in Yersinia pestis bv. Antiqua (strain Antiqua).